We begin with the raw amino-acid sequence, 194 residues long: Protein GrpE (194 aa).

Polar residues predominate over residues 1–13 (MENTQENPTSQNP). Residues 1-50 (MENTQENPTSQNPKPAEETARQAAEAAAPQQEAAANAATDSPASAEQAAL) are disordered. The segment covering 21-50 (RQAAEAAAPQQEAAANAATDSPASAEQAAL) has biased composition (low complexity).

It belongs to the GrpE family. As to quaternary structure, homodimer.

It is found in the cytoplasm. In terms of biological role, participates actively in the response to hyperosmotic and heat shock by preventing the aggregation of stress-denatured proteins, in association with DnaK and GrpE. It is the nucleotide exchange factor for DnaK and may function as a thermosensor. Unfolded proteins bind initially to DnaJ; upon interaction with the DnaJ-bound protein, DnaK hydrolyzes its bound ATP, resulting in the formation of a stable complex. GrpE releases ADP from DnaK; ATP binding to DnaK triggers the release of the substrate protein, thus completing the reaction cycle. Several rounds of ATP-dependent interactions between DnaJ, DnaK and GrpE are required for fully efficient folding. This chain is Protein GrpE, found in Paraburkholderia xenovorans (strain LB400).